The primary structure comprises 515 residues: Maturase K (515 aa).

Belongs to the intron maturase 2 family. MatK subfamily.

It localises to the plastid. The protein resides in the chloroplast. In terms of biological role, usually encoded in the trnK tRNA gene intron. Probably assists in splicing its own and other chloroplast group II introns. This chain is Maturase K, found in Helonias bullata (Swamp pink).